The sequence spans 397 residues: Protein Mx1 (397 aa).

It belongs to the TRAFAC class dynamin-like GTPase superfamily. Dynamin/Fzo/YdjA family.

The sequence is that of Protein Mx1 (Mx1) from Mus musculus (Mouse).